Reading from the N-terminus, the 374-residue chain is Muconate cycloisomerase 1 (374 aa).

The protein belongs to the cycloisomerase 2 family. As to quaternary structure, homotetramer.

It catalyses the reaction (S)-muconolactone = cis,cis-muconate + H(+). Its pathway is aromatic compound metabolism; beta-ketoadipate pathway; 5-oxo-4,5-dihydro-2-furylacetate from catechol: step 2/3. In terms of biological role, catalyzes a syn cycloisomerization. The chain is Muconate cycloisomerase 1 from Cutaneotrichosporon cutaneum (Yeast).